We begin with the raw amino-acid sequence, 1429 residues long: MRIPTICFLFLLISLSKSLHIGSCLGLICGRNGHCHAGPVNGTQTSYWCRCDEGFGGEYCEQQCDVSKCGADEKCVFDKDYRMETCVCKDCDINGNSLLKPSCPSGYGGDDCKTQGWCYPSVCMNGGQCIGAGNRAKCACPDGFKGERCELDVNECEENKNACGNRSTCMNTLGTYICVCPQGFLPPDCLKPGNTSTVEFKQPVCFLEISADHPDGRSMYCQNGGFCDKASSKCQCPPGYHGSTCELLEKEDSCASNPCSHGVCISFSGGFQCICDDGYSGSYCQEGKDNCVNNKCEAGSKCINGVNSYFCDCPPERTGPYCEKMDCSAIPDICNHGTCIDSPLSEKAFECQCEPGYEGILCEQDKNECLSENMCLNNGTCVNLPGSFRCDCARGFGGKWCDEPLNMCQDFHCENDGTCMHTSDHSPVCQCKNGFIGKRCEKECPIGFGGVRCDLRLEIGICSRQGGKCFNGGKCLSGFCVCPPDFTGNQCEVNRKNGKSSLSENLCLSDPCMNNATCIDVDAHIGYACICKQGFEGDICERHKDLCLENPCSNGGVCHQHRESFSCDCPPGFYGNGCEQEKMFRCLKSTCQNGGVCINEEEKGRKCECSYGFSGARCEEKINLTGFTEKDSLLRSVCEKRKCSERANDGNCDADCNYAACKFDGGDCSGKREPFSKCRYGNMCADFFANGVCNQACNNEECLYDGMDCLPAVVRCPVKIREHCASRFANGICDPECNTNGCGFDGGDCDNETNATIITNIRITVQMDPKEFQVTGGQSLMEISSALRVTVRIQRDEEGPLVFQWNGESEMDRVKMNERQLTEQHVLSTSISRKIKRSATNIGVVVYLEVQENCDTGKCLYKDAQSVVDSISARLAKKGIDSFGIPISEALVAEPRKSGNNTGFLSWNALLLIGAGCLIVMVVLMLGALPGNRTRKRRMINASVWMPPMENEEKNRKNHQSITSSQHSLLEASYDGYIKRQRNELQHYSLYPNPQGYGNGNDFLGDFNHTNLQIPTEPEPESPIKLHTEAAGSYAITEPITRESVNIIDPRHNRTVLHWIASNSSAEKSEDLIVHEAKECIAAGADVNAMDCDENTPLMLAVLARRRRLVAYLMKAGADPTIYNKSERSALHQAAANRDFGMMVYMLNSTKLKGDIEELDRNGMTALMIVAHNEGRDQVASAKLLVEKGAKVDYDGAARKDSEKYKGRTALHYAAQVSNMPIVKYLVGEKGSNKDKQDEDGKTPIMLAAQEGRIEVVMYLIQQGASVEAVDATDHTARQLAQANNHHNIVDIFDRCRPEREYSMDLHIQHTHQPQPSRKVTRAPKKQTSRSKKESASNSRDSTHLTPPPSDGSTSTPSPQHFMNTTHTTPTSLNYLSPEYQTEAGSSEAFQPQCGAFGNGEMWYTRASTSYTQMQNEPMTRYSEPAHYF.

A signal peptide spans 1-15 (MRIPTICFLFLLISL). Topologically, residues 16–908 (SKSLHIGSCL…GNNTGFLSWN (893 aa)) are extracellular. EGF-like domains follow at residues 20 to 61 (HIGS…EYCE) and 114 to 150 (TQGW…ERCE). 9 disulfide bridges follow: cysteine 24–cysteine 35, cysteine 29–cysteine 49, cysteine 51–cysteine 60, cysteine 118–cysteine 129, cysteine 123–cysteine 138, cysteine 140–cysteine 149, cysteine 156–cysteine 169, cysteine 163–cysteine 178, and cysteine 180–cysteine 189. An N-linked (GlcNAc...) asparagine glycan is attached at asparagine 41. One can recognise an EGF-like 3; calcium-binding domain in the interval 152–190 (DVNECEENKNACGNRSTCMNTLGTYICVCPQGFLPPDCL). N-linked (GlcNAc...) asparagine glycosylation is present at asparagine 165. A glycan (N-linked (GlcNAc...) asparagine) is linked at asparagine 194. EGF-like domains follow at residues 201–246 (KQPV…STCE), 250–285 (KEDS…SYCQ), 287–323 (GKDN…PYCE), and 323–363 (EKMD…ILCE). Cystine bridges form between cysteine 205-cysteine 227, cysteine 221-cysteine 234, cysteine 236-cysteine 245, cysteine 254-cysteine 264, cysteine 259-cysteine 273, cysteine 275-cysteine 284, cysteine 291-cysteine 302, cysteine 296-cysteine 311, cysteine 313-cysteine 322, cysteine 327-cysteine 339, cysteine 334-cysteine 351, cysteine 353-cysteine 362, cysteine 369-cysteine 381, cysteine 375-cysteine 390, cysteine 392-cysteine 401, cysteine 408-cysteine 419, cysteine 413-cysteine 429, cysteine 431-cysteine 440, cysteine 462-cysteine 475, cysteine 469-cysteine 480, cysteine 482-cysteine 491, cysteine 507-cysteine 518, cysteine 512-cysteine 529, cysteine 531-cysteine 540, cysteine 547-cysteine 558, cysteine 552-cysteine 567, cysteine 569-cysteine 578, cysteine 586-cysteine 597, cysteine 591-cysteine 607, and cysteine 609-cysteine 618. Residues 365–402 (DKNECLSENMCLNNGTCVNLPGSFRCDCARGFGGKWCD) form the EGF-like 8; calcium-binding domain. Asparagine 378 carries N-linked (GlcNAc...) asparagine glycosylation. 5 consecutive EGF-like domains span residues 404–441 (PLNM…KRCE), 449–492 (GGVR…NQCE), 503–541 (SENL…DICE), 543–579 (HKDL…NGCE), and 582–619 (KMFR…ARCE). Asparagine 515 carries an N-linked (GlcNAc...) asparagine glycan. A glycan (N-linked (GlcNAc...) asparagine) is linked at asparagine 623. Cystine bridges form between cysteine 638–cysteine 661, cysteine 643–cysteine 656, cysteine 652–cysteine 668, cysteine 678–cysteine 702, cysteine 684–cysteine 697, cysteine 693–cysteine 709, cysteine 716–cysteine 742, cysteine 724–cysteine 737, and cysteine 733–cysteine 749. 3 LNR repeats span residues 638–674 (CEKR…KREP), 678–709 (CRYG…GMDC), and 716–754 (CPVK…NETN). 3 N-linked (GlcNAc...) asparagine glycosylation sites follow: asparagine 751, asparagine 754, and asparagine 900. The chain crosses the membrane as a helical span at residues 909–931 (ALLLIGAGCLIVMVVLMLGALPG). Residues 932–1429 (NRTRKRRMIN…TRYSEPAHYF (498 aa)) are Cytoplasmic-facing. Positions 933 to 952 (RTRKRRMINASVWMPPMENE) are RAM domain. 5 ANK repeats span residues 1093–1122 (DENT…DPTI), 1126–1158 (SERS…DIEE), 1162–1194 (NGMT…KVDY), 1206–1236 (KGRT…NKDK), and 1240–1269 (DGKT…SVEA). The disordered stretch occupies residues 1308-1374 (IQHTHQPQPS…TTHTTPTSLN (67 aa)). The span at 1319–1330 (KVTRAPKKQTSR) shows a compositional bias: basic residues. Over residues 1361 to 1374 (HFMNTTHTTPTSLN) the composition is skewed to polar residues.

The protein belongs to the NOTCH family. In terms of assembly, may interact with dsl-1. May interact with lag-2. May interact with osm-11. Interacts with sel-10. When activated, the lin-12/Notch intracellular domain (NICD) can become a component of a complex consisting of at least the NICD, lag-1 and sel-8/lag-3. The NICD probably facilitates ordered assembly of the ternary complex via allosteric interactions of its RBP-j associated molecule (RAM) domain with lag-1. In terms of processing, upon binding its ligands, it is cleaved (S2 cleavage) in its extracellular domain, close to the transmembrane domain. S2 cleavage is probably mediated by the metalloproteases adm-4 and sup-17. It is then cleaved (S3 cleavage) downstream of its transmembrane domain, releasing it from the cell membrane; S3 cleavage requires a multiprotein gamma-secretase complex, which may include presenilin sel-12.

It is found in the apical cell membrane. The protein localises to the nucleus. In terms of biological role, essential signaling protein which has a major role in many developmental processes; involved in cell fate decisions that require cell-cell interactions. Probable membrane-bound receptor for putative ligands lag-2, apx-1, dsl-1 and osm-11. Upon ligand activation, and releasing from the cell membrane, the lin-12/Notch intracellular domain (NICD) forms a transcriptional activator complex with lag-1 and lag-3 and regulates expression of various genes. Required for ventral cell fates in the postembryonic mesodermal lineage (M lineage) and in uterine precursor cells. Activity in cell fate decisions and tumorigenesis is negatively regulated by sel-10. Best known for involvement in cell-fate decisions during development, but also plays roles in other events. Regulates recovery from the dauer larval state. Modulates chemosensory avoidance of octanol and quiescence during molting. Promotes basement membrane mobility during tissue remodeling. Involved in establishing left-right asymmetry during intestinal organogenesis. The sequence is that of Protein lin-12 from Caenorhabditis elegans.